The primary structure comprises 556 residues: 2-isopropylmalate synthase (556 aa).

Residues 33–307 (PIWCSSDLRD…HPQLDFSDID (275 aa)) form the Pyruvate carboxyltransferase domain. The Mg(2+) site is built by D42, H246, H248, and N282. The segment at 439–556 (ATSPYVLASH…AVTQAEAKAA (118 aa)) is regulatory domain.

This sequence belongs to the alpha-IPM synthase/homocitrate synthase family. LeuA type 2 subfamily. As to quaternary structure, homodimer. The cofactor is Mg(2+).

The protein resides in the cytoplasm. The enzyme catalyses 3-methyl-2-oxobutanoate + acetyl-CoA + H2O = (2S)-2-isopropylmalate + CoA + H(+). The protein operates within amino-acid biosynthesis; L-leucine biosynthesis; L-leucine from 3-methyl-2-oxobutanoate: step 1/4. Catalyzes the condensation of the acetyl group of acetyl-CoA with 3-methyl-2-oxobutanoate (2-ketoisovalerate) to form 3-carboxy-3-hydroxy-4-methylpentanoate (2-isopropylmalate). This Pseudomonas aeruginosa (strain ATCC 15692 / DSM 22644 / CIP 104116 / JCM 14847 / LMG 12228 / 1C / PRS 101 / PAO1) protein is 2-isopropylmalate synthase.